A 378-amino-acid polypeptide reads, in one-letter code: Odorant receptor Or2 (378 aa).

A topological domain (cytoplasmic) is located at residue methionine 1. A helical transmembrane segment spans residues 2 to 22 (LIEECPIIGVNVRVWLFWSYL). Residues 23 to 29 (RRPRLSR) are Extracellular-facing. The chain crosses the membrane as a helical span at residues 30-50 (FLVGCIPVAVLNVFQFLKLYS). The Cytoplasmic segment spans residues 51–59 (SWGDMSELI). The chain crosses the membrane as a helical span at residues 60–80 (INGYFTVLYFNLVLRTSFLVI). Residues 81–120 (NRRKFETFFEGVAAEYALLEKNDDIRPVLERYTRRGRMLS) lie on the Extracellular side of the membrane. A helical transmembrane segment spans residues 121 to 141 (ISNLWLGAFISACFVTYPLFV). Residues 142–164 (PGRGLPYGVTIPGVDVLATPTYQ) are Cytoplasmic-facing. A helical membrane pass occupies residues 165–185 (VVFVLQVYLTFPACCMYIPFT). Over 186-254 (SFYATCTLFA…HDLNSLVTHL (69 aa)) the chain is Extracellular. A helical transmembrane segment spans residues 255-275 (CLLEFLSFGMMLCALLFLLSI). The Cytoplasmic segment spans residues 276–278 (SNQ). The chain crosses the membrane as a helical span at residues 279 to 299 (LAQMIMIGSYIFMILSQMFAF). At 300-378 (YWHANEVLEQ…YFTLLRRVYN (79 aa)) the chain is on the extracellular side. Asparagine 364 is a glycosylation site (N-linked (GlcNAc...) asparagine).

It belongs to the insect chemoreceptor superfamily. Heteromeric odorant receptor channel (TC 1.A.69) family. Or30a subfamily. Expressed in male and female antennae and maxillary palps.

The protein resides in the cell membrane. Its function is as follows. Odorant receptor which plays a critical role in the anthropophilic host-seeking behavior; establishes the host preference to transmit malaria. This Anopheles gambiae (African malaria mosquito) protein is Odorant receptor Or2 (OR2).